The following is a 170-amino-acid chain: Ribulose bisphosphate carboxylase small subunit, chloroplastic (170 aa).

Transit peptides (chloroplast) lie at residues 1–46 and 1–47; these read MAPT…GRIR and MAPT…RIRC.

It belongs to the RuBisCO small chain family. As to quaternary structure, heterohexadecamer of 8 large and 8 small subunits.

The protein resides in the plastid. The protein localises to the chloroplast. Its function is as follows. RuBisCO catalyzes two reactions: the carboxylation of D-ribulose 1,5-bisphosphate, the primary event in carbon dioxide fixation, as well as the oxidative fragmentation of the pentose substrate. Both reactions occur simultaneously and in competition at the same active site. Although the small subunit is not catalytic it is essential for maximal activity. This is Ribulose bisphosphate carboxylase small subunit, chloroplastic from Zea mays (Maize).